A 407-amino-acid polypeptide reads, in one-letter code: Tryptophan synthase beta chain (407 aa).

Lys91 carries the post-translational modification N6-(pyridoxal phosphate)lysine.

The protein belongs to the TrpB family. As to quaternary structure, tetramer of two alpha and two beta chains. Pyridoxal 5'-phosphate serves as cofactor.

It carries out the reaction (1S,2R)-1-C-(indol-3-yl)glycerol 3-phosphate + L-serine = D-glyceraldehyde 3-phosphate + L-tryptophan + H2O. It participates in amino-acid biosynthesis; L-tryptophan biosynthesis; L-tryptophan from chorismate: step 5/5. Its function is as follows. The beta subunit is responsible for the synthesis of L-tryptophan from indole and L-serine. The sequence is that of Tryptophan synthase beta chain from Streptococcus pneumoniae (strain Taiwan19F-14).